Consider the following 624-residue polypeptide: DNA damage response protein Mdb1 (624 aa).

Disordered stretches follow at residues 177 to 237 (ERIP…DDES), 249 to 386 (GETK…KNKH), and 591 to 624 (IGKR…EQRT). 2 stretches are compositionally biased toward basic and acidic residues: residues 200 to 217 (DEKL…HSSD) and 225 to 235 (EDQKQLNKTDD). Positions 250-263 (ETKSPSSVSQSLSG) are enriched in polar residues. S253 and S283 each carry phosphoserine. Residues 294–305 (NISDSSIKNNSI) show a composition bias toward low complexity. Composition is skewed to basic and acidic residues over residues 306–316 (HSDEVNPEVRP) and 325–352 (EESK…REAE). The segment covering 356–386 (ISTNYSFPSSSLEDQPDKNVQSSAVENKNKH) has biased composition (polar residues). The BRCT domain maps to 376–468 (QSSAVENKNK…KVLDFRSYKY (93 aa)).

In terms of assembly, homodimer. Interacts (via BRCT domain) with hta1 peptide containing the S/T-Q motif in vitro; this interaction requires phosphorylation of the hta1 peptide at the S/T-Q motif.

The protein localises to the nucleus. It localises to the chromosome. The protein resides in the cytoplasm. Its subcellular location is the cytoskeleton. It is found in the spindle. Involved in DNA damage response (DDR) mediated through its interaction with phosphorylated H2A proteins hta1 and hta2 which mark the discrete foci of DNA damage. The chain is DNA damage response protein Mdb1 from Schizosaccharomyces pombe (strain 972 / ATCC 24843) (Fission yeast).